A 374-amino-acid chain; its full sequence is Lipid-A-disaccharide synthase (374 aa).

Belongs to the LpxB family.

It carries out the reaction a lipid X + a UDP-2-N,3-O-bis[(3R)-3-hydroxyacyl]-alpha-D-glucosamine = a lipid A disaccharide + UDP + H(+). Its pathway is bacterial outer membrane biogenesis; LPS lipid A biosynthesis. Functionally, condensation of UDP-2,3-diacylglucosamine and 2,3-diacylglucosamine-1-phosphate to form lipid A disaccharide, a precursor of lipid A, a phosphorylated glycolipid that anchors the lipopolysaccharide to the outer membrane of the cell. In Pseudomonas fluorescens (strain ATCC BAA-477 / NRRL B-23932 / Pf-5), this protein is Lipid-A-disaccharide synthase.